The sequence spans 1077 residues: Serine/threonine-protein kinase sel-5 (1077 aa).

The Protein kinase domain occupies 47-317 (VTIEKQIAEG…IYQTSVLAFE (271 aa)). ATP contacts are provided by residues 53–61 (IAEGGFAIV) and lysine 75. Catalysis depends on aspartate 178, which acts as the Proton acceptor. Disordered regions lie at residues 347–444 (MRDG…TDGS), 488–554 (GFTD…SQVV), 616–813 (ELDS…TNPF), and 920–1077 (LISV…PTDL). The span at 369–399 (IQSSSKMASLSQQVPSISNISMPSGSGTVET) shows a compositional bias: polar residues. Residues 491-515 (DLDKPALPRDRAQTDGKRRLPHESD) are compositionally biased toward basic and acidic residues. Positions 541–554 (SSQQTTSKTSSQVV) are enriched in low complexity. A compositionally biased stretch (polar residues) spans 638–648 (LTVSTSSSAQP). A compositionally biased stretch (acidic residues) spans 655–679 (TDEDDERQLLSETDEEEKYEIDEKE). 2 stretches are compositionally biased toward basic and acidic residues: residues 697–708 (DEQRMNDRRRYS) and 739–751 (DSRR…HDED). Acidic residues predominate over residues 770-780 (EDDGLEDDDDH). Residues 799-810 (GTSTPHTQNPIT) are compositionally biased toward polar residues. The span at 927 to 936 (TDPPPPPLPK) shows a compositional bias: pro residues. The segment covering 941–950 (ASPTQETTAT) has biased composition (polar residues). The segment covering 960–969 (KLLKKEKKKE) has biased composition (basic residues). Over residues 970-989 (KKDGKKDKLKLEEYREKGSS) the composition is skewed to basic and acidic residues. A compositionally biased stretch (polar residues) spans 1054–1067 (LTGKNASFVNTSFQ).

The protein belongs to the protein kinase superfamily. Ser/Thr protein kinase family. Requires Mg(2+) as cofactor.

The protein localises to the cytoplasm. It carries out the reaction L-seryl-[protein] + ATP = O-phospho-L-seryl-[protein] + ADP + H(+). The enzyme catalyses L-threonyl-[protein] + ATP = O-phospho-L-threonyl-[protein] + ADP + H(+). Functionally, serine/threonine-protein kinase which may play a role in lin-12-mediated cell-fate decisions. The polypeptide is Serine/threonine-protein kinase sel-5 (Caenorhabditis elegans).